A 922-amino-acid polypeptide reads, in one-letter code: Metabotropic glutamate receptor 7 (922 aa).

Positions methionine 1 to glycine 34 are cleaved as a signal peptide. The Extracellular portion of the chain corresponds to glutamine 35 to tryptophan 590. Cysteine 67 and cysteine 109 are oxidised to a cystine. A glycan (N-linked (GlcNAc...) asparagine) is linked at asparagine 98. Residues serine 159, alanine 180–threonine 182, tyrosine 230, and aspartate 314 contribute to the L-glutamate site. Cystine bridges form between cysteine 249-cysteine 541, cysteine 374-cysteine 390, cysteine 430-cysteine 437, cysteine 523-cysteine 542, cysteine 527-cysteine 545, cysteine 548-cysteine 560, and cysteine 563-cysteine 576. Lysine 407 is a binding site for L-glutamate. N-linked (GlcNAc...) asparagine glycosylation is found at asparagine 458 and asparagine 486. A glycan (N-linked (GlcNAc...) asparagine) is linked at asparagine 572. A helical transmembrane segment spans residues alanine 591–tyrosine 615. Residues asparagine 616–glutamate 627 are Cytoplasmic-facing. The chain crosses the membrane as a helical span at residues leucine 628–alanine 648. The Extracellular portion of the chain corresponds to lysine 649 to valine 654. A helical transmembrane segment spans residues cysteine 655–threonine 675. At lysine 676 to glutamine 702 the chain is on the cytoplasmic side. Residues leucine 703–valine 723 form a helical membrane-spanning segment. Over aspartate 724–aspartate 753 the chain is Extracellular. The chain crosses the membrane as a helical span at residues leucine 754–isoleucine 775. The Cytoplasmic portion of the chain corresponds to lysine 776 to lysine 788. A helical membrane pass occupies residues proline 789–glycine 810. Residues threonine 811 to leucine 825 lie on the Extracellular side of the membrane. A helical transmembrane segment spans residues threonine 826–phenylalanine 850. The Cytoplasmic portion of the chain corresponds to histidine 851–valine 922.

Belongs to the G-protein coupled receptor 3 family. In terms of assembly, homodimer. Interacts with PICK1.

Its subcellular location is the cell membrane. In terms of biological role, G-protein coupled receptor activated by glutamate that regulates axon outgrowth through the MAPK-cAMP-PKA signaling pathway during neuronal development. Ligand binding causes a conformation change that triggers signaling via guanine nucleotide-binding proteins (G proteins) and modulates the activity of downstream effectors, such as adenylate cyclase that it inhibits. This is Metabotropic glutamate receptor 7 (GRM7) from Pongo abelii (Sumatran orangutan).